The sequence spans 266 residues: Energy-coupling factor transporter transmembrane protein EcfT 1 (266 aa).

5 helical membrane passes run 33–53 (IGILFLANNWWTYALMVLFTL), 73–93 (LIWLILFTVVMQILFASGGTI), 107–127 (LLNGVFVFLRFVLIIIMSTVI), 152–172 (VPVNDIALMISVALRFIPTLM), and 243–263 (HFGDLIAACVMILLTAGLVIL).

Belongs to the energy-coupling factor EcfT family. In terms of assembly, forms a stable energy-coupling factor (ECF) transporter complex composed of 2 membrane-embedded substrate-binding proteins (S component), 2 ATP-binding proteins (A component) and 2 transmembrane proteins (T component). May be able to interact with more than 1 S component at a time.

Its subcellular location is the cell membrane. Transmembrane (T) component of an energy-coupling factor (ECF) ABC-transporter complex. Unlike classic ABC transporters this ECF transporter provides the energy necessary to transport a number of different substrates. The protein is Energy-coupling factor transporter transmembrane protein EcfT 1 of Listeria monocytogenes serotype 1/2a (strain 08-5578).